The primary structure comprises 500 residues: Glutamyl-tRNA(Gln) amidotransferase subunit A (500 aa).

Catalysis depends on charge relay system residues lysine 93 and serine 168. Residue serine 192 is the Acyl-ester intermediate of the active site.

It belongs to the amidase family. GatA subfamily. In terms of assembly, heterotrimer of A, B and C subunits.

The enzyme catalyses L-glutamyl-tRNA(Gln) + L-glutamine + ATP + H2O = L-glutaminyl-tRNA(Gln) + L-glutamate + ADP + phosphate + H(+). Its function is as follows. Allows the formation of correctly charged Gln-tRNA(Gln) through the transamidation of misacylated Glu-tRNA(Gln) in organisms which lack glutaminyl-tRNA synthetase. The reaction takes place in the presence of glutamine and ATP through an activated gamma-phospho-Glu-tRNA(Gln). In Corynebacterium jeikeium (strain K411), this protein is Glutamyl-tRNA(Gln) amidotransferase subunit A.